The primary structure comprises 114 residues: Dolichyl-diphosphooligosaccharide--protein glycosyltransferase subunit DAD2 (114 aa).

Residues 1–30 (MPKAAGDAKLLIQSLNKAYAATPTNLKIID) lie on the Cytoplasmic side of the membrane. The chain crosses the membrane as a helical span at residues 31 to 51 (LYVVFAVATALVQVVYMGIVG). Over 52–54 (SFP) the chain is Lumenal. The helical transmembrane segment at 55 to 75 (FNSFLSGVLSSIGTAVLGVCL) threads the bilayer. At 76–93 (RIQVNKDNKEFKDLPPER) the chain is on the cytoplasmic side. The helical transmembrane segment at 94-114 (AFADFVLCNLVLHLVIMNFLG) threads the bilayer.

This sequence belongs to the DAD/OST2 family. As to quaternary structure, component of the oligosaccharyltransferase (OST) complex.

The protein localises to the endoplasmic reticulum membrane. The protein operates within protein modification; protein glycosylation. Functionally, subunit of the oligosaccharyl transferase (OST) complex that catalyzes the initial transfer of a defined glycan (Glc(3)Man(9)GlcNAc(2) in eukaryotes) from the lipid carrier dolichol-pyrophosphate to an asparagine residue within an Asn-X-Ser/Thr consensus motif in nascent polypeptide chains, the first step in protein N-glycosylation. N-glycosylation occurs cotranslationally and the complex associates with the Sec61 complex at the channel-forming translocon complex that mediates protein translocation across the endoplasmic reticulum (ER). All subunits are required for a maximal enzyme activity. This is Dolichyl-diphosphooligosaccharide--protein glycosyltransferase subunit DAD2 (DAD2) from Hordeum vulgare (Barley).